A 990-amino-acid polypeptide reads, in one-letter code: MAVLKLADQPPLVQAIFSGDPEEIRMLIYKTEDVNALDAEKRTPLHVASFLGDADIIELLILSGARVNAKDNMWLTPLHRAVASRSEEAVQVLIKHSADVNARDKNWQTPLHVAAANKALKCAEIIIPMLSSVNVSDRGGRTALHHAALNGHVEMVNLLLAKGANINAFDKKDRRALHWAAYMGHLEVVALLINHGAEVTCKDKKGYTPLHAAASNGQINIVKHLLNLGVEIDEMNIYGNTALHIACYNGQDSVVNELIDYGANVNQPNNNGFTPLHFAAASTHGALCLELLVNNGADVNIQSKDGKSPLHMTAVHGRFTRSQTLIQNGGEIDCVDKDGNTPLHVAARYGHELLINTLITSGADTAKCGIHNMFPLHLAALNAHSDCCRKLLSSGFEIDTPDSFGRTCLHAAAAGGNVECIKLLQSSGADFNKKDKRGRTPLHYAAANCHFHCIETLVTTGANINETDDWGRTPLHYAAASDMDRKKNILGNSHENAEELERTSEMKEKEAALCLEFLLQNDANPSIQDKEGYNTVHYAAAYGHRQCLELLLEKNSNMFEESDSSATKSPLHLAAYNGHHQALEVLLQSLVDLDIKDEKGRTALDLAAFKGHAECVEALISQGASVTVKDNVTKRTPLHASVINGHTPCLRLLLEVADNPDVTDAKGQTPLMLAVAYGHIDAVSLLLEKEASVDAADLLGCTALHRGIMTGHEECVQMLLEKEVSILCKDARGRTPLHFAAARGHATWLSELLQIALSEEDCSLKDNQGYTPLHWACYNGHENCIEVLLEQKFFRKFYGNSFSPLHCAVINDHENCASMLIGAIDASIVNCKDDKGRTPLHAAAFADHVECLQLLLSHSAQVNAVDHAGKTALMMAAQNGHVGAVDFLVNIAKADLTLRDKDSNTSLHLASSKGHEKCALLILDKIQEQSLINAKNNSLQTPLHIAARNGLKMVVEELLAKGACVLAVDENVSRSNGPRTSSATDVQKEE.

ANK repeat units follow at residues 7–36, 40–69, 73–102, 106–135, 139–168, 172–201, 205–234, 238–267, 271–301, 305–334, 338–367, 371–400, 404–433, 437–466, 470–499, 531–560, 566–595, 599–628, 633–662, 666–695, 699–728, 732–761, 768–797, 800–829, 835–864, 868–898, 902–931, and 938–967; these read ADQP…DVNA, EKRT…RVNA, MWLT…DVNA, NWQT…SVNV, GGRT…NINA, KDRR…EVTC, KGYT…EIDE, YGNT…NVNQ, NGFT…DVNI, DGKS…EIDC, DGNT…DTAK, HNMF…EIDT, FGRT…DFNK, RGRT…NINE, WGRT…NAEE, EGYN…NMFE, ATKS…DLDI, KGRT…SVTV, TKRT…NPDV, KGQT…SVDA, LGCT…SILC, RGRT…SEED, QGYT…FRKF, NSFS…ASIV, KGRT…QVNA, AGKT…DLTL, DSNT…EQSL, and SLQT…CVLA.

As to quaternary structure, protein phosphatase 6 (PP6) holoenzyme is proposed to be a heterotrimeric complex formed by the catalytic subunit, a SAPS domain-containing subunit (PP6R) and an ankyrin repeat-domain containing regulatory subunit (ARS).

Its function is as follows. Putative regulatory subunit of protein phosphatase 6 (PP6) that may be involved in the recognition of phosphoprotein substrates. This chain is Serine/threonine-protein phosphatase 6 regulatory ankyrin repeat subunit B (ANKRD44), found in Gallus gallus (Chicken).